Consider the following 246-residue polypeptide: Nuclear transcription factor Y subunit C-2 (246 aa).

Disordered stretches follow at residues 1–35 (MDNQQLPYAGQPAAAGAGAPVPGVPGAGGPPAVPH) and 205–246 (QQGA…PSSE). Low complexity predominate over residues 9-21 (AGQPAAAGAGAPV).

The protein belongs to the NFYC/HAP5 subunit family. In terms of assembly, heterotrimeric transcription factor composed of three components, NF-YA, NF-YB and NF-YC. NF-YB and NF-YC must interact and dimerize for NF-YA association and DNA binding. Interacts with NFYB8, NFYB10 and HD5/NFYB11.

Its subcellular location is the nucleus. The protein localises to the cytoplasm. Probable transcription factor involved in the regulation of flowering time under long day (LD) conditions. Functions as a repressor of flowering, independently of HD1 and GHD7. Controls flowering time by negatively regulating the expression of EHD1 and HD3A. Component of the NF-Y/HAP transcription factor complex. The chain is Nuclear transcription factor Y subunit C-2 from Oryza sativa subsp. japonica (Rice).